A 461-amino-acid chain; its full sequence is Protein KlcB (461 aa).

2 disordered regions span residues 84-107 (PEAT…TEDK) and 349-379 (RAKA…EDAP). Positions 91 to 101 (ARRRTKARKSK) are enriched in basic residues. Basic and acidic residues predominate over residues 357 to 377 (GQRREPVTPAKPEPEPAKDED).

In Escherichia coli, this protein is Protein KlcB (klcB).